Here is a 178-residue protein sequence, read N- to C-terminus: Killin (178 aa).

A DNA-binding region spans residues 8 to 50; sequence SARPGRTVHVWGYRVEWKVRNGRKLQPSEWAGRGDLGGFKRRW.

It localises to the nucleus. In terms of biological role, DNA-binding protein involved in S phase checkpoint control-coupled apoptosis by mediating p53/TP53-induced apoptosis. Has the ability to inhibit DNA synthesis and S phase arrest coupled to apoptosis. Has affinity to both double- and single-stranded DNA. The protein is Killin (KLLN) of Homo sapiens (Human).